The sequence spans 97 residues: Large ribosomal subunit protein uL23 (97 aa).

Belongs to the universal ribosomal protein uL23 family. As to quaternary structure, part of the 50S ribosomal subunit. Contacts protein L29, and trigger factor when it is bound to the ribosome.

One of the early assembly proteins it binds 23S rRNA. One of the proteins that surrounds the polypeptide exit tunnel on the outside of the ribosome. Forms the main docking site for trigger factor binding to the ribosome. The protein is Large ribosomal subunit protein uL23 of Brucella melitensis biotype 2 (strain ATCC 23457).